We begin with the raw amino-acid sequence, 150 residues long: MRIVVQRVSHASVTIEGQCKSSIGKGMLILVGIEESDGQEDIDWLCKKIVNLRIFDDESGVMNKSILEDGGEILVISQFTLHASTKKGNRPSYIKAAKPEISVPLYERFCKDLSRALGKEIGTGTFGADMKVELLNDGPVTICMDTKNKE.

The Gly-cisPro motif, important for rejection of L-amino acids signature appears at 138-139 (GP).

This sequence belongs to the DTD family. Homodimer.

Its subcellular location is the cytoplasm. The enzyme catalyses glycyl-tRNA(Ala) + H2O = tRNA(Ala) + glycine + H(+). The catalysed reaction is a D-aminoacyl-tRNA + H2O = a tRNA + a D-alpha-amino acid + H(+). An aminoacyl-tRNA editing enzyme that deacylates mischarged D-aminoacyl-tRNAs. Also deacylates mischarged glycyl-tRNA(Ala), protecting cells against glycine mischarging by AlaRS. Acts via tRNA-based rather than protein-based catalysis; rejects L-amino acids rather than detecting D-amino acids in the active site. By recycling D-aminoacyl-tRNA to D-amino acids and free tRNA molecules, this enzyme counteracts the toxicity associated with the formation of D-aminoacyl-tRNA entities in vivo and helps enforce protein L-homochirality. This Bacteroides thetaiotaomicron (strain ATCC 29148 / DSM 2079 / JCM 5827 / CCUG 10774 / NCTC 10582 / VPI-5482 / E50) protein is D-aminoacyl-tRNA deacylase.